We begin with the raw amino-acid sequence, 188 residues long: Inactive cysteine S-methyltransferase OspZ (188 aa).

This sequence belongs to the NleE/OspZ family.

It is found in the secreted. It localises to the host cytoplasm. Its subcellular location is the host nucleus. Inactive effector protein: in contrast to other members of the family, does not have the ability to inhibit host cell NF-kappa-B activation. Probably lacks cysteine S-methyltransferase activity due to its inability to bind S-adenosyl-L-methionine at the C-terminus. The polypeptide is Inactive cysteine S-methyltransferase OspZ (Shigella flexneri).